The chain runs to 428 residues: D-amino acid dehydrogenase (428 aa).

Residue 3–17 coordinates FAD; the sequence is VVILGSGVVGVASAY.

Belongs to the DadA oxidoreductase family. The cofactor is FAD.

The catalysed reaction is a D-alpha-amino acid + A + H2O = a 2-oxocarboxylate + AH2 + NH4(+). It functions in the pathway amino-acid degradation; D-alanine degradation; NH(3) and pyruvate from D-alanine: step 1/1. Its function is as follows. Oxidative deamination of D-amino acids. The polypeptide is D-amino acid dehydrogenase (Burkholderia lata (strain ATCC 17760 / DSM 23089 / LMG 22485 / NCIMB 9086 / R18194 / 383)).